The primary structure comprises 121 residues: Large ribosomal subunit protein uL24 (121 aa).

This sequence belongs to the universal ribosomal protein uL24 family. As to quaternary structure, part of the 50S ribosomal subunit.

One of two assembly initiator proteins, it binds directly to the 5'-end of the 23S rRNA, where it nucleates assembly of the 50S subunit. In terms of biological role, located at the polypeptide exit tunnel on the outside of the subunit. The chain is Large ribosomal subunit protein uL24 from Methanocorpusculum labreanum (strain ATCC 43576 / DSM 4855 / Z).